The sequence spans 231 residues: Cuticle protein LPCP-23 (231 aa).

The signal sequence occupies residues 1-17; it reads MAFKFVVFAAALAYANA. 2 repeat units span residues 130–133 and 199–202.

Its function is as follows. Component of the cuticle of Tenebrio molitor. The protein is Cuticle protein LPCP-23 (LPCP-23) of Tenebrio molitor (Yellow mealworm beetle).